A 338-amino-acid polypeptide reads, in one-letter code: HTH-type transcriptional regulator SyrM 1 (338 aa).

An HTH lysR-type domain is found at 35 to 92 (LDLNTLLALEALLEHRNVTQAARHLGLSQPSVSRALIRLRGVFNDDLLVRGSSGMVPT). The segment at residues 52–72 (VTQAARHLGLSQPSVSRALIR) is a DNA-binding region (H-T-H motif).

The protein belongs to the LysR transcriptional regulatory family.

Transcriptional activator that regulates the expression of genes involved in symbiosis. Among other targets it acts on the nolWBTUV operon. The polypeptide is HTH-type transcriptional regulator SyrM 1 (syrM1) (Sinorhizobium fredii (strain NBRC 101917 / NGR234)).